The following is a 435-amino-acid chain: Arginine/serine-rich coiled-coil protein 2 (435 aa).

The segment covering 1–27 (MAASDTERDGLAPEKTSPDRDKKKEQS) has biased composition (basic and acidic residues). Positions 1-230 (MAASDTERDG…PSPPPFRGRN (230 aa)) are disordered. Ala-2 is subject to N-acetylalanine. Ser-4 is modified (phosphoserine). A phosphothreonine mark is found at Thr-6 and Thr-16. Residues Ser-17, Ser-30, and Ser-32 each carry the phosphoserine modification. Residues 35–51 (ASKHHYSRSRSRSRERK) show a composition bias toward basic residues. The span at 66-111 (RSKEARRHESKDKSSKKHKSEEHNDKEHSSDKGRERLNSSENGEDR) shows a compositional bias: basic and acidic residues. At Ser-104 the chain carries Phosphoserine. The span at 112–214 (HKRKERKSSR…KRIEKPRRFS (103 aa)) shows a compositional bias: basic residues. Residues 230–270 (NTAMDAQEALARRLERAKKLQEQREKEMVEKQKQQEIAAAA) adopt a coiled-coil conformation. Residue Lys-376 forms a Glycyl lysine isopeptide (Lys-Gly) (interchain with G-Cter in SUMO1); alternate linkage. Lys-376 is covalently cross-linked (Glycyl lysine isopeptide (Lys-Gly) (interchain with G-Cter in SUMO2); alternate). At Ser-377 the chain carries Phosphoserine.

It belongs to the RSRC2 family.

The sequence is that of Arginine/serine-rich coiled-coil protein 2 (RSRC2) from Pongo abelii (Sumatran orangutan).